Consider the following 222-residue polypeptide: Exosome complex component Rrp4 (222 aa).

The region spanning 63–131 is the S1 motif domain; it reads GDLVIGRVTG…EINRVKLTLR (69 aa).

The protein belongs to the RRP4 family. As to quaternary structure, component of the archaeal exosome complex. Forms a trimer of Rrp4 and/or Csl4 subunits. The trimer associates with a hexameric ring-like arrangement composed of 3 Rrp41-Rrp42 heterodimers.

It is found in the cytoplasm. In terms of biological role, non-catalytic component of the exosome, which is a complex involved in RNA degradation. Increases the RNA binding and the efficiency of RNA degradation. Confers strong poly(A) specificity to the exosome. This Methanosphaera stadtmanae (strain ATCC 43021 / DSM 3091 / JCM 11832 / MCB-3) protein is Exosome complex component Rrp4.